Here is a 369-residue protein sequence, read N- to C-terminus: Anhydro-N-acetylmuramic acid kinase (369 aa).

12 to 19 (GTSMDGVD) lines the ATP pocket.

Belongs to the anhydro-N-acetylmuramic acid kinase family.

It carries out the reaction 1,6-anhydro-N-acetyl-beta-muramate + ATP + H2O = N-acetyl-D-muramate 6-phosphate + ADP + H(+). It functions in the pathway amino-sugar metabolism; 1,6-anhydro-N-acetylmuramate degradation. Its pathway is cell wall biogenesis; peptidoglycan recycling. Catalyzes the specific phosphorylation of 1,6-anhydro-N-acetylmuramic acid (anhMurNAc) with the simultaneous cleavage of the 1,6-anhydro ring, generating MurNAc-6-P. Is required for the utilization of anhMurNAc either imported from the medium or derived from its own cell wall murein, and thus plays a role in cell wall recycling. This is Anhydro-N-acetylmuramic acid kinase from Shewanella woodyi (strain ATCC 51908 / MS32).